Reading from the N-terminus, the 175-residue chain is Phosphatidylglycerol/phosphatidylinositol transfer protein (175 aa).

Positions 1–21 are cleaved as a signal peptide; it reads MKFLSTAAALLVCLAPVSTTA. Residues 22 to 37 constitute a propeptide that is removed on maturation; that stretch reads RSLDFFKSSQSPIQAQ.

It belongs to the NPC2 family. Monomer.

Its subcellular location is the cytoplasm. The protein localises to the cytoplasmic vesicle. It localises to the golgi apparatus. Its function is as follows. Catalyzes the intermembrane transfer of phosphatidylglycerol and phosphatidylinositol. The sequence is that of Phosphatidylglycerol/phosphatidylinositol transfer protein (pltp) from Aspergillus oryzae (strain ATCC 42149 / RIB 40) (Yellow koji mold).